We begin with the raw amino-acid sequence, 292 residues long: 4-hydroxy-tetrahydrodipicolinate synthase (292 aa).

Thr-45 serves as a coordination point for pyruvate. Tyr-133 serves as the catalytic Proton donor/acceptor. The active-site Schiff-base intermediate with substrate is the Lys-161. Ile-203 contributes to the pyruvate binding site.

Belongs to the DapA family. As to quaternary structure, homotetramer; dimer of dimers.

Its subcellular location is the cytoplasm. The enzyme catalyses L-aspartate 4-semialdehyde + pyruvate = (2S,4S)-4-hydroxy-2,3,4,5-tetrahydrodipicolinate + H2O + H(+). It functions in the pathway amino-acid biosynthesis; L-lysine biosynthesis via DAP pathway; (S)-tetrahydrodipicolinate from L-aspartate: step 3/4. Catalyzes the condensation of (S)-aspartate-beta-semialdehyde [(S)-ASA] and pyruvate to 4-hydroxy-tetrahydrodipicolinate (HTPA). This Acidiphilium cryptum (strain JF-5) protein is 4-hydroxy-tetrahydrodipicolinate synthase.